We begin with the raw amino-acid sequence, 214 residues long: Response regulator GacA (214 aa).

One can recognise a Response regulatory domain in the interval lysine 3 to phenylalanine 119. Aspartate 54 carries the 4-aspartylphosphate modification. One can recognise an HTH luxR-type domain in the interval histidine 143–glycine 208. Residues valine 167–tyrosine 186 constitute a DNA-binding region (H-T-H motif).

In terms of biological role, positively controls the production of the autoinducer N-butyryl-homoserine lactone and the formation of the virulence factors pyocyanine, cyanide, and lipase. This chain is Response regulator GacA (gacA), found in Pseudomonas aeruginosa (strain ATCC 15692 / DSM 22644 / CIP 104116 / JCM 14847 / LMG 12228 / 1C / PRS 101 / PAO1).